The primary structure comprises 143 residues: MITALMYFSSKLGKASFNSCNIGFSLDGSSSDFLLAGKGGCSSSSSFASSAGVTTSSSSIPEDLFTFSSTLGVPSLAEVSLSFFPSEFRSTSVVFEISSLIDSGTLLFSRREESLIPSFSSMILIWQYRFAGGGYLTSLKLFI.

This is an uncharacterized protein from Saccharomyces cerevisiae (strain ATCC 204508 / S288c) (Baker's yeast).